The sequence spans 467 residues: Siroheme synthase (467 aa).

Residues 1–203 (METLPIFMKL…GQEEAARHAM (203 aa)) form a precorrin-2 dehydrogenase /sirohydrochlorin ferrochelatase region. NAD(+) contacts are provided by residues 22–23 (EI) and 43–44 (PE). Phosphoserine is present on Ser-128. The interval 216-467 (GEVYLVGGGP…APSPEVVSAG (252 aa)) is uroporphyrinogen-III C-methyltransferase. Pro-225 provides a ligand contact to S-adenosyl-L-methionine. Asp-248 functions as the Proton acceptor in the catalytic mechanism. Lys-270 acts as the Proton donor in catalysis. S-adenosyl-L-methionine contacts are provided by residues 301–303 (GGD), Ile-306, 331–332 (TA), Met-383, and Gly-412.

In the N-terminal section; belongs to the precorrin-2 dehydrogenase / sirohydrochlorin ferrochelatase family. It in the C-terminal section; belongs to the precorrin methyltransferase family.

It catalyses the reaction uroporphyrinogen III + 2 S-adenosyl-L-methionine = precorrin-2 + 2 S-adenosyl-L-homocysteine + H(+). The catalysed reaction is precorrin-2 + NAD(+) = sirohydrochlorin + NADH + 2 H(+). It carries out the reaction siroheme + 2 H(+) = sirohydrochlorin + Fe(2+). It participates in cofactor biosynthesis; adenosylcobalamin biosynthesis; precorrin-2 from uroporphyrinogen III: step 1/1. The protein operates within cofactor biosynthesis; adenosylcobalamin biosynthesis; sirohydrochlorin from precorrin-2: step 1/1. Its pathway is porphyrin-containing compound metabolism; siroheme biosynthesis; precorrin-2 from uroporphyrinogen III: step 1/1. It functions in the pathway porphyrin-containing compound metabolism; siroheme biosynthesis; siroheme from sirohydrochlorin: step 1/1. It participates in porphyrin-containing compound metabolism; siroheme biosynthesis; sirohydrochlorin from precorrin-2: step 1/1. Multifunctional enzyme that catalyzes the SAM-dependent methylations of uroporphyrinogen III at position C-2 and C-7 to form precorrin-2 via precorrin-1. Then it catalyzes the NAD-dependent ring dehydrogenation of precorrin-2 to yield sirohydrochlorin. Finally, it catalyzes the ferrochelation of sirohydrochlorin to yield siroheme. The chain is Siroheme synthase from Methylobacillus flagellatus (strain ATCC 51484 / DSM 6875 / VKM B-1610 / KT).